The chain runs to 752 residues: Neuroendocrine convertase 1 (752 aa).

The first 27 residues, 1–27 (MKQRGWTLQCTAFTLFCVWCALNSVKA), serve as a signal peptide directing secretion. The propeptide occupies 28-110 (KRQFVNEWAA…QQYEKERRKR (83 aa)). The region spanning 129 to 450 (QWYLQDTRMT…FGLLNAKALV (322 aa)) is the Peptidase S8 domain. Catalysis depends on Asp-167, which acts as the Charge relay system. Asn-173 is a glycosylation site (N-linked (GlcNAc...) asparagine). Residue His-208 is the Charge relay system of the active site. 2 cysteine pairs are disulfide-bonded: Cys-225–Cys-374 and Cys-317–Cys-347. Ser-382 acts as the Charge relay system in catalysis. Asn-401 carries N-linked (GlcNAc...) asparagine glycosylation. The 138-residue stretch at 460–597 (NVPEKKECII…KLILHGTSSQ (138 aa)) folds into the P/Homo B domain. A disulfide bridge connects residues Cys-467 and Cys-494. The segment at 631–662 (PTQNSLNGNLLVPKNSSSSSVEDRRDEQVQGA) is disordered. Asn-645 carries an N-linked (GlcNAc...) asparagine glycan.

It belongs to the peptidase S8 family. Furin subfamily. Requires Ca(2+) as cofactor.

Its subcellular location is the cytoplasmic vesicle. It is found in the secretory vesicle. The enzyme catalyses Release of protein hormones, neuropeptides and renin from their precursors, generally by hydrolysis of -Lys-Arg-|- bonds.. Its function is as follows. Involved in the processing of hormone and other protein precursors at sites comprised of pairs of basic amino acid residues. Substrates include POMC, renin, enkephalin, dynorphin, somatostatin, insulin and AGRP. The chain is Neuroendocrine convertase 1 (Pcsk1) from Rattus norvegicus (Rat).